The sequence spans 642 residues: Threonine--tRNA ligase (642 aa).

The region spanning 1–61 (MPIITLPDGS…EHDASLEIIT (61 aa)) is the TGS domain. A catalytic region spans residues 244–535 (DHRKIGKQLD…LIEEYAGFFP (292 aa)). Cys335, His386, and His512 together coordinate Zn(2+).

Belongs to the class-II aminoacyl-tRNA synthetase family. Homodimer. The cofactor is Zn(2+).

The protein localises to the cytoplasm. It catalyses the reaction tRNA(Thr) + L-threonine + ATP = L-threonyl-tRNA(Thr) + AMP + diphosphate + H(+). In terms of biological role, catalyzes the attachment of threonine to tRNA(Thr) in a two-step reaction: L-threonine is first activated by ATP to form Thr-AMP and then transferred to the acceptor end of tRNA(Thr). Also edits incorrectly charged L-seryl-tRNA(Thr). This Vibrio cholerae serotype O1 (strain ATCC 39541 / Classical Ogawa 395 / O395) protein is Threonine--tRNA ligase.